A 718-amino-acid chain; its full sequence is Peroxisomal bifunctional enzyme (718 aa).

Residues 1-280 are enoyl-CoA hydratase / isomerase; it reads MAEYLRLPHS…FAEKSANKWS (280 aa). Residue Lys38 is modified to N6-succinyllysine. Substrate is bound at residue Gly99. 2 positions are modified to N6-acetyllysine; alternate: Lys163 and Lys172. N6-succinyllysine; alternate is present on residues Lys163 and Lys172. An N6-succinyllysine modification is found at Lys181. N6-acetyllysine; alternate occurs at positions 189 and 217. N6-succinyllysine; alternate is present on residues Lys189 and Lys217. An N6-succinyllysine modification is found at Lys240. Lys248 carries the N6-acetyllysine modification. Lys252 carries the post-translational modification N6-succinyllysine. Residue Lys274 is modified to N6-acetyllysine; alternate. Lys274 is modified (N6-succinyllysine; alternate). 3 positions are modified to N6-succinyllysine: Lys278, Lys288, and Lys329. Positions 281–567 are 3-hydroxyacyl-CoA dehydrogenase; sequence TPSGASWKTA…DMLCEAGRFG (287 aa). An N6-acetyllysine mark is found at Lys344, Lys348, Lys355, and Lys459. Lys527 is subject to N6-succinyllysine. Thr543 bears the Phosphothreonine mark. N6-succinyllysine is present on Lys572. Residues Lys579, Lys586, and Lys705 each carry the N6-acetyllysine; alternate modification. 3 positions are modified to N6-succinyllysine; alternate: Lys579, Lys586, and Lys705. The Microbody targeting signal motif lies at 716-718; sequence SKL. Lys717 bears the N6-succinyllysine mark.

The protein in the N-terminal section; belongs to the enoyl-CoA hydratase/isomerase family. In the C-terminal section; belongs to the 3-hydroxyacyl-CoA dehydrogenase family. Monomer. Acetylated, leading to enhanced enzyme activity. Acetylation is enhanced by up to 80% after treatment either with trichostin A (TCA) or with nicotinamide (NAM) with highest increase on Lys-344. Acetylation and enzyme activity increased by about 1.5% on addition of fatty acids.

It localises to the peroxisome. The enzyme catalyses a (3S)-3-hydroxyacyl-CoA = a (2E)-enoyl-CoA + H2O. The catalysed reaction is a 4-saturated-(3S)-3-hydroxyacyl-CoA = a (3E)-enoyl-CoA + H2O. It carries out the reaction a (3Z)-enoyl-CoA = a 4-saturated (2E)-enoyl-CoA. It catalyses the reaction a (3E)-enoyl-CoA = a 4-saturated (2E)-enoyl-CoA. The enzyme catalyses a (3S)-3-hydroxyacyl-CoA + NAD(+) = a 3-oxoacyl-CoA + NADH + H(+). The catalysed reaction is (2S,3S)-3-hydroxy-2-methylbutanoyl-CoA = (2E)-2-methylbut-2-enoyl-CoA + H2O. It carries out the reaction (2E)-dodecenedioyl-CoA + H2O = (3S)-hydroxydodecanedioyl-CoA. It catalyses the reaction (3S)-hydroxydodecanedioyl-CoA + NAD(+) = 3-oxododecanedioyl-CoA + NADH + H(+). The enzyme catalyses (2E)-octenedioyl-CoA + H2O = (3S)-hydroxyoctanedioyl-CoA. The catalysed reaction is (3S)-hydroxyoctanedioyl-CoA + NAD(+) = 3-oxooctanedioyl-CoA + NADH + H(+). It carries out the reaction (2E)-decenedioyl-CoA + H2O = (3S)-hydroxydecanedioyl-CoA. It catalyses the reaction (3S)-hydroxydecanedioyl-CoA + NAD(+) = 3-oxodecanedioyl-CoA + NADH + H(+). The enzyme catalyses (2E)-tetradecenedioyl-CoA + H2O = (3S)-hydroxytetradecanedioyl-CoA. The catalysed reaction is (3S)-hydroxytetradecanedioyl-CoA + NAD(+) = 3-oxotetradecanedioyl-CoA + NADH + H(+). It carries out the reaction (3E,5Z)-tetradecadienoyl-CoA = (2E,5Z)-tetradecadienoyl-CoA. It catalyses the reaction (3E,5Z)-octadienoyl-CoA = (2E,5Z)-octadienoyl-CoA. The enzyme catalyses (3S)-hydroxydecanoyl-CoA + NAD(+) = 3-oxodecanoyl-CoA + NADH + H(+). The catalysed reaction is (3E)-decenoyl-CoA = (2E)-decenoyl-CoA. It carries out the reaction (3Z)-hexenoyl-CoA = (2E)-hexenoyl-CoA. It catalyses the reaction (3E)-hexenoyl-CoA = (2E)-hexenoyl-CoA. The enzyme catalyses (3S)-hydroxydecanoyl-CoA = (2E)-decenoyl-CoA + H2O. The catalysed reaction is (3S)-hydroxyhexanoyl-CoA = (2E)-hexenoyl-CoA + H2O. It carries out the reaction (3S)-hydroxyhexadecanoyl-CoA + NAD(+) = 3-oxohexadecanoyl-CoA + NADH + H(+). It catalyses the reaction (3S)-hydroxyhexadecanoyl-CoA = (2E)-hexadecenoyl-CoA + H2O. The enzyme catalyses (2E)-hexadecenedioyl-CoA + H2O = (3S)-hydroxyhexadecanedioyl-CoA. The catalysed reaction is (3S)-hydroxyhexadecanedioyl-CoA + NAD(+) = 3-oxohexadecanedioyl-CoA + NADH + H(+). It participates in lipid metabolism; fatty acid beta-oxidation. Enzyme activity enhanced by acetylation. In terms of biological role, peroxisomal trifunctional enzyme possessing 2-enoyl-CoA hydratase, 3-hydroxyacyl-CoA dehydrogenase, and delta 3, delta 2-enoyl-CoA isomerase activities. Catalyzes two of the four reactions of the long chain fatty acids peroxisomal beta-oxidation pathway. Can also use branched-chain fatty acids such as 2-methyl-2E-butenoyl-CoA as a substrate, which is hydrated into (2S,3S)-3-hydroxy-2-methylbutanoyl-CoA. Optimal isomerase for 2,5 double bonds into 3,5 form isomerization in a range of enoyl-CoA species. Also able to isomerize both 3-cis and 3-trans double bonds into the 2-trans form in a range of enoyl-CoA species. With HSD17B4, catalyzes the hydration of trans-2-enoyl-CoA and the dehydrogenation of 3-hydroxyacyl-CoA, but with opposite chiral specificity. Regulates the amount of medium-chain dicarboxylic fatty acids which are essential regulators of all fatty acid oxidation pathways. Also involved in the degradation of long-chain dicarboxylic acids through peroxisomal beta-oxidation. In Mus musculus (Mouse), this protein is Peroxisomal bifunctional enzyme.